A 131-amino-acid chain; its full sequence is Small ribosomal subunit protein eS8 (131 aa).

The interval 1–42 (MKLGAYYKGGDLKKPSGGKKRKVRKTKKKALGGGPPQIPKLG) is disordered. Residues 16 to 30 (SGGKKRKVRKTKKKA) show a composition bias toward basic residues.

The protein belongs to the eukaryotic ribosomal protein eS8 family. As to quaternary structure, part of the 30S ribosomal subunit.

In Pyrobaculum aerophilum (strain ATCC 51768 / DSM 7523 / JCM 9630 / CIP 104966 / NBRC 100827 / IM2), this protein is Small ribosomal subunit protein eS8.